The sequence spans 298 residues: Bifunctional protein FolD (298 aa).

Residues 165–167 (GRS), Ser-190, and Ile-231 contribute to the NADP(+) site.

The protein belongs to the tetrahydrofolate dehydrogenase/cyclohydrolase family. As to quaternary structure, homodimer.

The enzyme catalyses (6R)-5,10-methylene-5,6,7,8-tetrahydrofolate + NADP(+) = (6R)-5,10-methenyltetrahydrofolate + NADPH. It carries out the reaction (6R)-5,10-methenyltetrahydrofolate + H2O = (6R)-10-formyltetrahydrofolate + H(+). Its pathway is one-carbon metabolism; tetrahydrofolate interconversion. Catalyzes the oxidation of 5,10-methylenetetrahydrofolate to 5,10-methenyltetrahydrofolate and then the hydrolysis of 5,10-methenyltetrahydrofolate to 10-formyltetrahydrofolate. The protein is Bifunctional protein FolD of Prochlorococcus marinus (strain MIT 9312).